We begin with the raw amino-acid sequence, 457 residues long: Siroheme synthase (457 aa).

Residues 1 to 204 (MDHLPIFCQL…NDQKAITETT (204 aa)) form a precorrin-2 dehydrogenase /sirohydrochlorin ferrochelatase region. NAD(+) is bound by residues 22 to 23 (DV) and 43 to 44 (LA). Ser-128 bears the Phosphoserine mark. Residues 216-457 (GEVVLVGAGP…RDKLNWFSNH (242 aa)) form a uroporphyrinogen-III C-methyltransferase region. An S-adenosyl-L-methionine-binding site is contributed by Pro-225. Asp-248 functions as the Proton acceptor in the catalytic mechanism. Lys-270 serves as the catalytic Proton donor. S-adenosyl-L-methionine is bound by residues 301-303 (GGD), Ile-306, 331-332 (TA), Met-382, and Gly-411.

The protein in the N-terminal section; belongs to the precorrin-2 dehydrogenase / sirohydrochlorin ferrochelatase family. In the C-terminal section; belongs to the precorrin methyltransferase family.

It catalyses the reaction uroporphyrinogen III + 2 S-adenosyl-L-methionine = precorrin-2 + 2 S-adenosyl-L-homocysteine + H(+). It carries out the reaction precorrin-2 + NAD(+) = sirohydrochlorin + NADH + 2 H(+). The catalysed reaction is siroheme + 2 H(+) = sirohydrochlorin + Fe(2+). It participates in cofactor biosynthesis; adenosylcobalamin biosynthesis; precorrin-2 from uroporphyrinogen III: step 1/1. The protein operates within cofactor biosynthesis; adenosylcobalamin biosynthesis; sirohydrochlorin from precorrin-2: step 1/1. It functions in the pathway porphyrin-containing compound metabolism; siroheme biosynthesis; precorrin-2 from uroporphyrinogen III: step 1/1. Its pathway is porphyrin-containing compound metabolism; siroheme biosynthesis; siroheme from sirohydrochlorin: step 1/1. It participates in porphyrin-containing compound metabolism; siroheme biosynthesis; sirohydrochlorin from precorrin-2: step 1/1. Its function is as follows. Multifunctional enzyme that catalyzes the SAM-dependent methylations of uroporphyrinogen III at position C-2 and C-7 to form precorrin-2 via precorrin-1. Then it catalyzes the NAD-dependent ring dehydrogenation of precorrin-2 to yield sirohydrochlorin. Finally, it catalyzes the ferrochelation of sirohydrochlorin to yield siroheme. The chain is Siroheme synthase from Escherichia coli O6:K15:H31 (strain 536 / UPEC).